A 547-amino-acid polypeptide reads, in one-letter code: Methionine--tRNA ligase (547 aa).

Positions 15 to 25 (PYANGSLHLGH) match the 'HIGH' region motif. Cys-146, Cys-149, Cys-159, and Cys-162 together coordinate Zn(2+). The 'KMSKS' region motif lies at 332 to 336 (KMSKS). ATP is bound at residue Lys-335.

This sequence belongs to the class-I aminoacyl-tRNA synthetase family. MetG type 1 subfamily. In terms of assembly, monomer. It depends on Zn(2+) as a cofactor.

It localises to the cytoplasm. The enzyme catalyses tRNA(Met) + L-methionine + ATP = L-methionyl-tRNA(Met) + AMP + diphosphate. In terms of biological role, is required not only for elongation of protein synthesis but also for the initiation of all mRNA translation through initiator tRNA(fMet) aminoacylation. The sequence is that of Methionine--tRNA ligase from Baumannia cicadellinicola subsp. Homalodisca coagulata.